Consider the following 771-residue polypeptide: Assimilatory nitrate reductase electron transfer subunit (771 aa).

Position 43-79 (43-79) interacts with FAD; sequence YNRILLSSVLQGEASLDDITLNSKDWYDKHGITLYTG. Residues C414, C416, C449, and C452 each contribute to the [2Fe-2S] cluster site.

FAD is required as a cofactor. It depends on [2Fe-2S] cluster as a cofactor.

In terms of biological role, required for nitrate assimilation. The protein is Assimilatory nitrate reductase electron transfer subunit (nasB) of Bacillus subtilis (strain 168).